The sequence spans 554 residues: Hydroxylamine reductase (554 aa).

4 residues coordinate [2Fe-2S] cluster: cysteine 3, cysteine 6, cysteine 18, and cysteine 25. 8 residues coordinate hybrid [4Fe-2O-2S] cluster: histidine 252, glutamate 276, cysteine 320, cysteine 408, cysteine 436, cysteine 461, glutamate 495, and lysine 497. Cysteine persulfide is present on cysteine 408.

The protein belongs to the HCP family. It depends on [2Fe-2S] cluster as a cofactor. Requires hybrid [4Fe-2O-2S] cluster as cofactor.

Its subcellular location is the cytoplasm. The enzyme catalyses A + NH4(+) + H2O = hydroxylamine + AH2 + H(+). In terms of biological role, catalyzes the reduction of hydroxylamine to form NH(3) and H(2)O. This chain is Hydroxylamine reductase, found in Shewanella amazonensis (strain ATCC BAA-1098 / SB2B).